The sequence spans 260 residues: Glutathione S-transferase domain-containing protein DDB_G0280881 (260 aa).

The region spanning 7–96 (KVDFIFYTNG…YLAQKYNTFL (90 aa)) is the GST N-terminal domain. The 127-residue stretch at 102 to 228 (NPKENSDVIT…QQISEGFKNF (127 aa)) folds into the GST C-terminal domain.

The protein belongs to the GST superfamily.

This Dictyostelium discoideum (Social amoeba) protein is Glutathione S-transferase domain-containing protein DDB_G0280881.